The sequence spans 116 residues: Large ribosomal subunit protein bL20 (116 aa).

This sequence belongs to the bacterial ribosomal protein bL20 family.

Its function is as follows. Binds directly to 23S ribosomal RNA and is necessary for the in vitro assembly process of the 50S ribosomal subunit. It is not involved in the protein synthesizing functions of that subunit. In Desulfatibacillum aliphaticivorans, this protein is Large ribosomal subunit protein bL20.